The sequence spans 488 residues: Sucrose phosphorylase (488 aa).

Residues D50, H88, 191 to 193 (RLD), E233, 290 to 291 (HD), 341 to 344 (DLYQ), and R398 each bind sucrose. D193 functions as the Nucleophile in the catalytic mechanism. E233 serves as the catalytic Proton donor.

It belongs to the glycosyl hydrolase 13 family. Sucrose phosphorylase subfamily.

The catalysed reaction is sucrose + phosphate = D-fructose + alpha-D-glucose 1-phosphate. In Agrobacterium vitis (Rhizobium vitis), this protein is Sucrose phosphorylase.